The primary structure comprises 1088 residues: Protein argonaute 18 (1088 aa).

The tract at residues M1–P220 is disordered. 6 stretches are compositionally biased toward gly residues: residues G20–R30, Y51–R86, G95–H127, G135–Y148, A161–G182, and G191–S206. Over residues Q211–P220 the composition is skewed to pro residues. One can recognise a PAZ domain in the interval T477–P574. The region spanning L747–T1056 is the Piwi domain.

Belongs to the argonaute family. Ago subfamily.

Probably involved in the RNA silencing pathway. May bind to short RNAs such as microRNAs (miRNAs) or short interfering RNAs (siRNAs), and represses the translation of mRNAs which are complementary to them. This chain is Protein argonaute 18 (AGO18), found in Oryza sativa subsp. japonica (Rice).